Reading from the N-terminus, the 152-residue chain is Ribosome maturation factor RimP (152 aa).

The protein belongs to the RimP family.

The protein resides in the cytoplasm. In terms of biological role, required for maturation of 30S ribosomal subunits. This chain is Ribosome maturation factor RimP, found in Alteromonas mediterranea (strain DSM 17117 / CIP 110805 / LMG 28347 / Deep ecotype).